Consider the following 696-residue polypeptide: DNA ligase (696 aa).

Residues 36–40 (DAEYD), 85–86 (SL), and E123 each bind NAD(+). The active-site N6-AMP-lysine intermediate is K125. R146, E181, K319, and K343 together coordinate NAD(+). The Zn(2+) site is built by C437, C440, C455, and C461. Residues 618–696 (PEGTSLAGKT…EDGLKALLGL (79 aa)) enclose the BRCT domain.

It belongs to the NAD-dependent DNA ligase family. LigA subfamily. It depends on Mg(2+) as a cofactor. The cofactor is Mn(2+).

The catalysed reaction is NAD(+) + (deoxyribonucleotide)n-3'-hydroxyl + 5'-phospho-(deoxyribonucleotide)m = (deoxyribonucleotide)n+m + AMP + beta-nicotinamide D-nucleotide.. DNA ligase that catalyzes the formation of phosphodiester linkages between 5'-phosphoryl and 3'-hydroxyl groups in double-stranded DNA using NAD as a coenzyme and as the energy source for the reaction. It is essential for DNA replication and repair of damaged DNA. The protein is DNA ligase of Bordetella parapertussis (strain 12822 / ATCC BAA-587 / NCTC 13253).